Here is a 263-residue protein sequence, read N- to C-terminus: Hydroxyacylglutathione hydrolase (263 aa).

Residues H55, H57, D59, H60, H117, D134, and H172 each coordinate Zn(2+).

The protein belongs to the metallo-beta-lactamase superfamily. Glyoxalase II family. As to quaternary structure, monomer. Zn(2+) serves as cofactor.

The catalysed reaction is an S-(2-hydroxyacyl)glutathione + H2O = a 2-hydroxy carboxylate + glutathione + H(+). It functions in the pathway secondary metabolite metabolism; methylglyoxal degradation; (R)-lactate from methylglyoxal: step 2/2. Functionally, thiolesterase that catalyzes the hydrolysis of S-D-lactoyl-glutathione to form glutathione and D-lactic acid. In Shewanella baltica (strain OS195), this protein is Hydroxyacylglutathione hydrolase.